The following is a 197-amino-acid chain: ATP-dependent Clp protease proteolytic subunit (197 aa).

Ser-101 acts as the Nucleophile in catalysis. His-126 is an active-site residue.

This sequence belongs to the peptidase S14 family. In terms of assembly, component of the chloroplastic Clp protease core complex.

It localises to the plastid. It is found in the chloroplast stroma. It catalyses the reaction Hydrolysis of proteins to small peptides in the presence of ATP and magnesium. alpha-casein is the usual test substrate. In the absence of ATP, only oligopeptides shorter than five residues are hydrolyzed (such as succinyl-Leu-Tyr-|-NHMec, and Leu-Tyr-Leu-|-Tyr-Trp, in which cleavage of the -Tyr-|-Leu- and -Tyr-|-Trp bonds also occurs).. In terms of biological role, cleaves peptides in various proteins in a process that requires ATP hydrolysis. Has a chymotrypsin-like activity. Plays a major role in the degradation of misfolded proteins. In Daucus carota (Wild carrot), this protein is ATP-dependent Clp protease proteolytic subunit.